The chain runs to 260 residues: Ribosome maturation factor RimP (260 aa).

2 stretches are compositionally biased toward basic and acidic residues: residues 189-199 (RRGRDAEREQL) and 215-227 (AREMRDKAGPRKE). The disordered stretch occupies residues 189 to 260 (RRGRDAEREQ…QTTSDPHQGE (72 aa)). A compositionally biased stretch (basic residues) spans 228 to 242 (KTAKKPLPKNTKAHR).

This sequence belongs to the RimP family.

It is found in the cytoplasm. Its function is as follows. Required for maturation of 30S ribosomal subunits. This chain is Ribosome maturation factor RimP, found in Afipia carboxidovorans (strain ATCC 49405 / DSM 1227 / KCTC 32145 / OM5) (Oligotropha carboxidovorans).